The following is a 357-amino-acid chain: Prostaglandin D2 receptor (357 aa).

Topologically, residues 1-20 (MNESYRCQTSTWVERGSSAT) are extracellular. N-linked (GlcNAc...) asparagine glycosylation occurs at asparagine 2. The helical transmembrane segment at 21–41 (MGAVLFGAGLLGNLLALVLLA) threads the bilayer. The Cytoplasmic segment spans residues 42-58 (RSGLGSCRPGPLHPPPS). Residues 59–79 (VFYVLVCGLTVTDLLGKCLIS) traverse the membrane as a helical segment. Residues 80 to 106 (PMVLAAYAQNQSLKELLPASGNQLCET) are Extracellular-facing. Residue asparagine 89 is glycosylated (N-linked (GlcNAc...) asparagine). A disulfide bridge connects residues cysteine 104 and cysteine 182. A helical transmembrane segment spans residues 107 to 127 (FAFLMSFFGLASTLQLLAMAV). Over 128–149 (ECWLSLGHPFFYQRHVTLRRGV) the chain is Cytoplasmic. Residues 150–170 (LVAPVVAAFCLAFCALPFAGF) form a helical membrane-spanning segment. Topologically, residues 171–194 (GKFVQYCPGTWCFIQMIHKERSFS) are extracellular. The helical transmembrane segment at 195–215 (VIGFSVLYSSLMALLVLATVV) threads the bilayer. Residues 216 to 261 (CNLGAMYNLYDMHRRQRHYPHRCSRDRAQSGSDYRHGSLHPLEELD) lie on the Cytoplasmic side of the membrane. A helical transmembrane segment spans residues 262 to 282 (HFVLLALMTVLFTMCSLPLIY). Residues 283 to 306 (RAYYGAFKLENKAEGDSEDLQALR) are Extracellular-facing. Residues 307-327 (FLSVISIVDPWIFIIFRTSVF) traverse the membrane as a helical segment. Over 328 to 357 (RMLFHKVFTRPLIYRNWSSHSQQSNVESTL) the chain is Cytoplasmic.

The protein belongs to the G-protein coupled receptor 1 family. In terms of tissue distribution, most abundantly expressed in the ileum, followed by lung, stomach and uterus.

It is found in the cell membrane. Functionally, receptor for prostaglandin D2 (PGD2). The activity of this receptor is mainly mediated by G(s) proteins that stimulate adenylate cyclase, resulting in an elevation of intracellular cAMP. A mobilization of calcium is also observed, but without formation of inositol 1,4,5-trisphosphate. Involved in PLA2G3-dependent maturation of mast cells. PLA2G3 is secreted by immature mast cells and acts on nearby fibroblasts upstream to PTDGS to synthesize PGD2, which in turn promotes mast cell maturation and degranulation via PTGDR. The chain is Prostaglandin D2 receptor (Ptgdr) from Mus musculus (Mouse).